Consider the following 427-residue polypeptide: 5'-deoxyadenosine deaminase (427 aa).

Zn(2+) is bound by residues histidine 62 and histidine 64. The substrate site is built by glutamate 91 and histidine 183. Position 210 (histidine 210) interacts with Zn(2+). 2 residues coordinate substrate: glutamate 213 and aspartate 298. Residue aspartate 298 participates in Zn(2+) binding.

This sequence belongs to the metallo-dependent hydrolases superfamily. MTA/SAH deaminase family. As to quaternary structure, homotetramer. It depends on Zn(2+) as a cofactor.

The catalysed reaction is 5'-deoxyadenosine + H2O + H(+) = 5'-deoxyinosine + NH4(+). It catalyses the reaction S-adenosyl-L-homocysteine + H2O + H(+) = S-inosyl-L-homocysteine + NH4(+). The enzyme catalyses S-methyl-5'-thioadenosine + H2O + H(+) = S-methyl-5'-thioinosine + NH4(+). It carries out the reaction adenosine + H2O + H(+) = inosine + NH4(+). Its pathway is amino-acid biosynthesis; S-adenosyl-L-methionine biosynthesis. Catalyzes the deamination of three SAM-derived enzymatic products, namely 5'-deoxyadenosine, S-adenosyl-L-homocysteine, and 5'-methylthioadenosine, to produce the inosine analogs. Can also deaminate adenosine. The preferred substrate for this enzyme is 5'-deoxyadenosine, but all these substrates are efficiently deaminated. Likely functions in a S-adenosyl-L-methionine (SAM) recycling pathway from S-adenosyl-L-homocysteine (SAH) produced from SAM-dependent methylation reactions. May also be involved in the recycling of 5'-deoxyadenosine, whereupon the 5'-deoxyribose moiety of 5'-deoxyinosine is further metabolized to deoxyhexoses used for the biosynthesis of aromatic amino acids in methanogens. The protein is 5'-deoxyadenosine deaminase of Methanothermobacter thermautotrophicus (strain ATCC 29096 / DSM 1053 / JCM 10044 / NBRC 100330 / Delta H) (Methanobacterium thermoautotrophicum).